The following is a 104-amino-acid chain: MKREAFKMFLKPGFEKEYEKRHAAIWPELKKMLSDGGVYDYSIYWDKDTNILFACQKTKGEESSQDMGANPIVQKWWDYMADIMEVNPDNSPVTIPLPEVFHMD.

Tyr18 contacts substrate. His22 acts as the Proton donor in catalysis. Substrate-binding positions include Tyr41 and 76–77; that span reads WW.

The protein belongs to the rhamnose mutarotase family. In terms of assembly, homodimer.

The protein localises to the cytoplasm. It carries out the reaction alpha-L-rhamnose = beta-L-rhamnose. Its pathway is carbohydrate metabolism; L-rhamnose metabolism. Functionally, involved in the anomeric conversion of L-rhamnose. The chain is L-rhamnose mutarotase from Phocaeicola vulgatus (strain ATCC 8482 / DSM 1447 / JCM 5826 / CCUG 4940 / NBRC 14291 / NCTC 11154) (Bacteroides vulgatus).